The chain runs to 647 residues: MMNQDNPYAMNQTCKVCGEPAAGFHFGAFTCEGCKSFFGRSYNNLSSISDCKNNGECIINKKNRTACKACRLKKCLMVGMSKSGSRYGRRSNWFKIHCLLQEQQQQAVAAMAAHHNSQQAGGGSSGGSGGGQGMPNGVKGMSGVPPPAAAAAALGMLGHPGGYPGLYAVANAGGSSRSKEELMMLGLDGSVEYGSHKHPVVASPSVSSPDSHNSDSSVEVSSVRGNPLLHLGGKSNSGGSSSGADGSHSGGGGGGGGGVTPGRPPQMRKDLSPFLPLPFPGLASMPVMPPPAFLPPSHLLFPGYHPALYSHHQGLLKPTPEQQQAAVAAAAVQHLFNSSGAGQRFAPGTSPFANHQQHHKEEDQPAPARSPSTHANNNHLLTNGGAADELTKRFYLDAVLKSQQQSPPPTTKLPPHSKQDYSISALVTPNSESGRERVKSRQNEEDDEARADGIIDGAEHDDEEEDLVVSMTPPHSPAQQEERTPAGEDPRPSPGQDNPIDLSMKTTGSSLSSKSSSPEIEPETEISSDVEKNDTDDDDEDLKVTPEEEISVRETADPEIEEDHSSTTETAKTSIENTHNNNNSISNNNNNNNNNNNSILSDSEASETIKRKLDELIEASSENGKRLRLEAPVKVATSNALDLTTKV.

The segment at residues 11-87 is a DNA-binding region (nuclear receptor); that stretch reads NQTCKVCGEP…VGMSKSGSRY (77 aa). 2 consecutive NR C4-type zinc fingers follow at residues 14-34 and 51-75; these read CKVCGEPAAGFHFGAFTCEGC and CKNNGECIINKKNRTACKACRLKKC. Disordered regions lie at residues 111–142, 196–274, 340–383, and 402–600; these read MAAHHNSQQAGGGSSGGSGGGQGMPNGVKGMS, HKHP…LSPF, GAGQ…LLTN, and SQQQ…NSIL. Residues 120–134 are compositionally biased toward gly residues; it reads AGGGSSGGSGGGQGM. Low complexity-rich tracts occupy residues 200 to 223 and 232 to 247; these read VVASPSVSSPDSHNSDSSVEVSSV and GGKSNSGGSSSGADGS. Gly residues predominate over residues 248–260; sequence HSGGGGGGGGGVT. Polar residues-rich tracts occupy residues 370-381 and 420-432; these read SPSTHANNNHLL and DYSISALVTPNSE. 2 stretches are compositionally biased toward basic and acidic residues: residues 433 to 443 and 480 to 491; these read SGRERVKSRQN and QEERTPAGEDPR. Residues 502–519 are compositionally biased toward low complexity; it reads LSMKTTGSSLSSKSSSPE. Residues 520–541 show a composition bias toward acidic residues; the sequence is IEPETEISSDVEKNDTDDDDED. A compositionally biased stretch (basic and acidic residues) spans 542–556; it reads LKVTPEEEISVRETA. A compositionally biased stretch (polar residues) spans 567 to 579; the sequence is TTETAKTSIENTH. Residues 580–599 show a composition bias toward low complexity; that stretch reads NNNNSISNNNNNNNNNNNSI.

The protein belongs to the nuclear hormone receptor family. NR0 subfamily.

The protein resides in the nucleus. The polypeptide is Knirps-related protein (knrl) (Drosophila melanogaster (Fruit fly)).